Here is a 547-residue protein sequence, read N- to C-terminus: CTP synthase (547 aa).

Residues 1–265 (MARFVFITGG…DQAVLDAFSI (265 aa)) form an amidoligase domain region. Serine 13 serves as a coordination point for CTP. Serine 13 is a UTP binding site. Residues 14–19 (SLGKGL) and aspartate 71 each bind ATP. Positions 71 and 139 each coordinate Mg(2+). CTP-binding positions include 146-148 (DIE), 186-191 (KTKPTQ), and lysine 222. Residues 186–191 (KTKPTQ) and lysine 222 contribute to the UTP site. Positions 291-546 (NVAIVGKYTQ…VRAAKEVSRL (256 aa)) constitute a Glutamine amidotransferase type-1 domain. Residue glycine 353 participates in L-glutamine binding. Catalysis depends on cysteine 380, which acts as the Nucleophile; for glutamine hydrolysis. L-glutamine is bound by residues 381–384 (LGMQ), glutamate 404, and arginine 474. Catalysis depends on residues histidine 519 and glutamate 521.

It belongs to the CTP synthase family. As to quaternary structure, homotetramer.

The catalysed reaction is UTP + L-glutamine + ATP + H2O = CTP + L-glutamate + ADP + phosphate + 2 H(+). It catalyses the reaction L-glutamine + H2O = L-glutamate + NH4(+). The enzyme catalyses UTP + NH4(+) + ATP = CTP + ADP + phosphate + 2 H(+). Its pathway is pyrimidine metabolism; CTP biosynthesis via de novo pathway; CTP from UDP: step 2/2. Allosterically activated by GTP, when glutamine is the substrate; GTP has no effect on the reaction when ammonia is the substrate. The allosteric effector GTP functions by stabilizing the protein conformation that binds the tetrahedral intermediate(s) formed during glutamine hydrolysis. Inhibited by the product CTP, via allosteric rather than competitive inhibition. Functionally, catalyzes the ATP-dependent amination of UTP to CTP with either L-glutamine or ammonia as the source of nitrogen. Regulates intracellular CTP levels through interactions with the four ribonucleotide triphosphates. This is CTP synthase from Dinoroseobacter shibae (strain DSM 16493 / NCIMB 14021 / DFL 12).